The following is a 138-amino-acid chain: Thyrotropin subunit beta (138 aa).

The N-terminal stretch at 1-20 (MNAVVLFSVLFALACGQVSS) is a signal peptide. Disulfide bonds link Cys-22–Cys-72, Cys-36–Cys-87, Cys-39–Cys-125, Cys-47–Cys-103, Cys-51–Cys-105, and Cys-108–Cys-115. Asn-43 carries N-linked (GlcNAc...) asparagine glycosylation. The propeptide occupies 133–138 (LGGFSG).

This sequence belongs to the glycoprotein hormones subunit beta family. In terms of assembly, heterodimer of a common alpha chain and a unique beta chain which confers biological specificity to thyrotropin, lutropin, follitropin and gonadotropin.

The protein localises to the secreted. In terms of biological role, indispensable for the control of thyroid structure and metabolism. The protein is Thyrotropin subunit beta (Tshb) of Rattus norvegicus (Rat).